Reading from the N-terminus, the 224-residue chain is MQILLVEDDNTLFQELKKELEQWDFNVAGIEDFGKVMDTFESFNPEIVILDVQLPKYDGFYWCRKMREVSNVPILFLSSRDNPMDQVMSMELGADDYMQKPFYTNVLIAKLQAIYRRVYEFTAEEKRTLTWQDAVIDLSKDSIQKGDQTIFLSKTEMIILEILITKKNQIVSRDTIITALWDDEAFVSDNTLTVNVNRLRKKLSEIGMDSAIETKVGKGYMAHE.

The Response regulatory domain occupies 2–115 (QILLVEDDNT…VLIAKLQAIY (114 aa)). A 4-aspartylphosphate modification is found at D51. A DNA-binding region (ompR/PhoB-type) is located at residues 126–224 (KRTLTWQDAV…KVGKGYMAHE (99 aa)). Phosphothreonine occurs at positions 128, 130, and 149.

Interacts with GraX. In terms of processing, phosphorylated by GraS. Phosphorylated by Stk1; phosphorylation increases the DNA-binding activity of GraR.

It is found in the cytoplasm. Its function is as follows. Member of the two-component regulatory system GraR/GraS involved in resistance against cationic antimicrobial peptides (CAMPs). Upon phosphorylation by GraS, functions as a transcription regulator by direct binding to promoter regions of target genes such as adhesins, exoproteins, transporters, toxins, and proteins involved in cell wall synthesis. Down-regulates the expression of many genes involved in RNA and amino acid synthesis or glycolysis. The chain is Response regulator protein GraR (graR) from Staphylococcus aureus (strain MRSA252).